The following is a 213-amino-acid chain: ATP-dependent Clp protease proteolytic subunit (213 aa).

Catalysis depends on serine 114, which acts as the Nucleophile. The active site involves histidine 139.

The protein belongs to the peptidase S14 family. Fourteen ClpP subunits assemble into 2 heptameric rings which stack back to back to give a disk-like structure with a central cavity, resembling the structure of eukaryotic proteasomes.

Its subcellular location is the cytoplasm. It carries out the reaction Hydrolysis of proteins to small peptides in the presence of ATP and magnesium. alpha-casein is the usual test substrate. In the absence of ATP, only oligopeptides shorter than five residues are hydrolyzed (such as succinyl-Leu-Tyr-|-NHMec, and Leu-Tyr-Leu-|-Tyr-Trp, in which cleavage of the -Tyr-|-Leu- and -Tyr-|-Trp bonds also occurs).. Its function is as follows. Cleaves peptides in various proteins in a process that requires ATP hydrolysis. Has a chymotrypsin-like activity. Plays a major role in the degradation of misfolded proteins. The polypeptide is ATP-dependent Clp protease proteolytic subunit (Pseudomonas syringae pv. syringae (strain B728a)).